The following is a 350-amino-acid chain: Histidinol-phosphate aminotransferase (350 aa).

At lysine 210 the chain carries N6-(pyridoxal phosphate)lysine.

This sequence belongs to the class-II pyridoxal-phosphate-dependent aminotransferase family. Histidinol-phosphate aminotransferase subfamily. In terms of assembly, homodimer. The cofactor is pyridoxal 5'-phosphate.

It catalyses the reaction L-histidinol phosphate + 2-oxoglutarate = 3-(imidazol-4-yl)-2-oxopropyl phosphate + L-glutamate. Its pathway is amino-acid biosynthesis; L-histidine biosynthesis; L-histidine from 5-phospho-alpha-D-ribose 1-diphosphate: step 7/9. In Pseudomonas syringae pv. syringae (strain B728a), this protein is Histidinol-phosphate aminotransferase.